Consider the following 335-residue polypeptide: NAC domain-containing protein 60 (335 aa).

The 143-residue stretch at 14–156 (TFPGFKFSPT…ALVICRLRRN (143 aa)) folds into the NAC domain. The DNA-binding element occupies 112–162 (IGTKRTLVFHIGRAPKGGRTEWLMHEYCMIGVSLDALVICRLRRNTEFQGS). A helical transmembrane segment spans residues 315–335 (ARWDVVVWLLVMIAVLVFYLV).

As to expression, expressed in roots, rosette leaves, cauline leaves, shoot apex, stems and flowers.

The protein resides in the membrane. It is found in the nucleus. In terms of biological role, transcriptional activator activated by proteolytic cleavage through regulated intramembrane proteolysis (RIP). Transcription factor involved in modulation of abscisic acid (ABA) signaling. Attenuates ABA sensitivity and glucose-induced ABA accumulation. Reduces the expression of ABI4 gene. The chain is NAC domain-containing protein 60 from Arabidopsis thaliana (Mouse-ear cress).